The following is an 89-amino-acid chain: MALTAEQKKEILNSYGLHETDTGSPEAQIALLTKRISDLTEHLKVHKHDHHSRRGLLLLVGRRRRLIKYISQIDVQRYRSLIERLGLRR.

It belongs to the universal ribosomal protein uS15 family. Part of the 30S ribosomal subunit. Forms a bridge to the 50S subunit in the 70S ribosome, contacting the 23S rRNA.

Functionally, one of the primary rRNA binding proteins, it binds directly to 16S rRNA where it helps nucleate assembly of the platform of the 30S subunit by binding and bridging several RNA helices of the 16S rRNA. Forms an intersubunit bridge (bridge B4) with the 23S rRNA of the 50S subunit in the ribosome. In Mycobacterium marinum (strain ATCC BAA-535 / M), this protein is Small ribosomal subunit protein uS15.